The chain runs to 307 residues: Acetaldehyde dehydrogenase 1 (307 aa).

C132 functions as the Acyl-thioester intermediate in the catalytic mechanism. NAD(+) contacts are provided by residues 163 to 171 and N274; that span reads SVGPGTRKN.

The protein belongs to the acetaldehyde dehydrogenase family.

It catalyses the reaction acetaldehyde + NAD(+) + CoA = acetyl-CoA + NADH + H(+). This chain is Acetaldehyde dehydrogenase 1 (tesF), found in Comamonas testosteroni (Pseudomonas testosteroni).